The primary structure comprises 599 residues: Exocyst complex component EXO70B2 (599 aa).

The interval 38-58 (GASGNRGGDPRPTPSRGGSNV) is disordered.

This sequence belongs to the EXO70 family. In terms of assembly, self interacts. Interacts with EXO70B1. Interacts with the exocyst subunits EXO70H1, SEC5A and SEC15B. Binds to SNAP33. Subunit of the exocyst complex that mediates vesicle tethering during exocytosis. Binds to PUB22. Post-translationally, target of the E3 ubiquitin-protein ligase PUB22 that mediates its ubiquitination and degradation via the 26S proteasome to attenuate pathogen-associated molecular patterns (PAMP)-induced signaling, especially is response to the bacterial elicitor flg22. As to expression, mostly expressed in leaves and, to a lower extent, in roots, cotyledons, internodes, flower buds, siliques and anthers.

It is found in the cytoplasmic vesicle. The protein resides in the phagosome. It localises to the cytoplasm. The protein localises to the nucleus. In terms of biological role, component of an exocyst subcomplex specifically involved in autophagy-related, Golgi-independent membrane traffic to the vacuole. Regulates autophagosome formation and autophagy-related Golgi-independent import into the vacuole. Positive regulator of defense responses to pathogenic bacteria (e.g. P.syringae pv. maculicola), to the biotrophic oomycete H.arabidopsidis and to fungi (e.g. B.graminis hordei), especially in cell wall apposition formation related to plant defense. Required for both immediate and later responses triggered by pathogen-associated molecular patterns (PAMPs). Positive regulator of abscisic acid (ABA)-independent mannitol (drought)-promoted stomatal closure. In Arabidopsis thaliana (Mouse-ear cress), this protein is Exocyst complex component EXO70B2.